Here is a 169-residue protein sequence, read N- to C-terminus: Probable calcium-binding protein CML13 (169 aa).

Residues 1-26 (MSTVKGQTRRERPRGARPHGLTKQKR) are disordered. Over residues 15-24 (GARPHGLTKQ) the composition is skewed to basic residues. EF-hand domains lie at 24-59 (QKRQ…LGFE), 60-95 (MTEE…KIGE), 97-132 (DSKE…LGEN), and 133-168 (FTYQ…TGYG). 20 residues coordinate Ca(2+): D37, D39, S41, T43, E48, D73, D75, S77, S79, E84, D110, D112, N114, K116, D121, D146, N148, D150, E152, and E157.

Its function is as follows. Potential calcium sensor. The polypeptide is Probable calcium-binding protein CML13 (CML13) (Oryza sativa subsp. japonica (Rice)).